The chain runs to 829 residues: Probable beta-glucosidase H (829 aa).

Asn-13 carries an N-linked (GlcNAc...) asparagine glycan. Asp-225 is a catalytic residue. 5 N-linked (GlcNAc...) asparagine glycosylation sites follow: Asn-304, Asn-473, Asn-602, Asn-627, and Asn-664. Positions Arg-389–Val-548 constitute a PA14 domain.

It belongs to the glycosyl hydrolase 3 family.

The protein resides in the secreted. The enzyme catalyses Hydrolysis of terminal, non-reducing beta-D-glucosyl residues with release of beta-D-glucose.. Its pathway is glycan metabolism; cellulose degradation. Its function is as follows. Beta-glucosidases are one of a number of cellulolytic enzymes involved in the degradation of cellulosic biomass. Catalyzes the last step releasing glucose from the inhibitory cellobiose. The polypeptide is Probable beta-glucosidase H (bglH) (Neosartorya fischeri (strain ATCC 1020 / DSM 3700 / CBS 544.65 / FGSC A1164 / JCM 1740 / NRRL 181 / WB 181) (Aspergillus fischerianus)).